A 274-amino-acid chain; its full sequence is Protein YehF (274 aa).

A WGR domain is found at 2–78 (RHFIYQDEKS…KDNSLQPSQT (77 aa)).

Its function is as follows. Has been implicated in selenate reduction; a mini-Tn10 insertion mutant in 'molR', (which was mapped to 47.3 centisomes i.e. this locus), is defective in the reduction of selenate. This chain is Protein YehF (yehF), found in Escherichia coli (strain K12).